Reading from the N-terminus, the 644-residue chain is Far upstream element-binding protein 1 (644 aa).

2 disordered regions span residues 1 to 31 (MADY…NDAF) and 44 to 94 (KIGG…PMHQ). At alanine 2 the chain carries N-acetylalanine. Residues 14 to 27 (SAGGGGGGGGGGGV) show a composition bias toward gly residues. A phosphoserine mark is found at serine 52 and serine 55. Positions 65 to 77 (RPLEDGDQPDAKK) are enriched in basic and acidic residues. Residues 81–94 (QNDSFGTQLPPMHQ) are compositionally biased toward polar residues. 3 KH domains span residues 100–164 (VMTE…KRLL), 185–251 (NAVQ…KEMV), and 275–339 (NEGI…AEII). At serine 140 the chain carries Phosphoserine. A Phosphothreonine modification is found at threonine 153. 4 positions are modified to omega-N-methylarginine: arginine 321, arginine 359, arginine 361, and arginine 363. The disordered stretch occupies residues 346–365 (VQAGNPGGPGPGGRGRGRGQ). The span at 350 to 365 (NPGGPGPGGRGRGRGQ) shows a compositional bias: gly residues. In terms of domain architecture, KH 4 spans 376–443 (LQEFNFIVPT…QQIDYARQLI (68 aa)). Position 432 is a phosphothreonine (threonine 432). Disordered regions lie at residues 447–532 (IGGP…GTDP) and 548–580 (QAQP…AGQV). Positions 468 to 505 (PHGPPGPPGPGTPMGPYNPAPYNPGPPGPAPHGPPAPY) are enriched in pro residues. Over residues 556–573 (PAGAPTTTQTNGQGDQQN) the composition is skewed to low complexity. A Phosphoserine modification is found at serine 630.

In terms of assembly, found in a complex with PUF60 and far upstream element (FUSE) DNA segment. Interacts with PUF60 and JTV1. Ubiquitinated. This targets the protein for proteasome-mediated degradation.

The protein localises to the nucleus. Regulates MYC expression by binding to a single-stranded far-upstream element (FUSE) upstream of the MYC promoter. May act both as activator and repressor of transcription. The sequence is that of Far upstream element-binding protein 1 (FUBP1) from Homo sapiens (Human).